A 226-amino-acid chain; its full sequence is Leucyl/phenylalanyl-tRNA--protein transferase (226 aa).

The protein belongs to the L/F-transferase family.

Its subcellular location is the cytoplasm. The catalysed reaction is N-terminal L-lysyl-[protein] + L-leucyl-tRNA(Leu) = N-terminal L-leucyl-L-lysyl-[protein] + tRNA(Leu) + H(+). It carries out the reaction N-terminal L-arginyl-[protein] + L-leucyl-tRNA(Leu) = N-terminal L-leucyl-L-arginyl-[protein] + tRNA(Leu) + H(+). It catalyses the reaction L-phenylalanyl-tRNA(Phe) + an N-terminal L-alpha-aminoacyl-[protein] = an N-terminal L-phenylalanyl-L-alpha-aminoacyl-[protein] + tRNA(Phe). Its function is as follows. Functions in the N-end rule pathway of protein degradation where it conjugates Leu, Phe and, less efficiently, Met from aminoacyl-tRNAs to the N-termini of proteins containing an N-terminal arginine or lysine. This Bradyrhizobium sp. (strain ORS 278) protein is Leucyl/phenylalanyl-tRNA--protein transferase.